The sequence spans 337 residues: ATP-dependent 6-phosphofructokinase (337 aa).

Gly11 contacts ATP. Residue Arg21–Arg25 coordinates ADP. Residues Arg72 to Tyr73 and Gly102 to Ser105 each bind ATP. Asp103 provides a ligand contact to Mg(2+). Thr125–Asp127 contributes to the substrate binding site. Asp127 serves as the catalytic Proton acceptor. Residue Arg154 participates in ADP binding. Residues Arg162 and Met169–Arg171 each bind substrate. Residues Gly185 to Asp187, Lys212, and Lys214 to His216 contribute to the ADP site. Residues Glu223, Arg245, and His251–Arg254 contribute to the substrate site.

It belongs to the phosphofructokinase type A (PFKA) family. ATP-dependent PFK group I subfamily. Prokaryotic clade 'B1' sub-subfamily. As to quaternary structure, homotetramer. Mg(2+) serves as cofactor.

Its subcellular location is the cytoplasm. The enzyme catalyses beta-D-fructose 6-phosphate + ATP = beta-D-fructose 1,6-bisphosphate + ADP + H(+). It functions in the pathway carbohydrate degradation; glycolysis; D-glyceraldehyde 3-phosphate and glycerone phosphate from D-glucose: step 3/4. With respect to regulation, allosterically activated by ADP and other diphosphonucleosides, and allosterically inhibited by phosphoenolpyruvate. Catalyzes the phosphorylation of D-fructose 6-phosphate to fructose 1,6-bisphosphate by ATP, the first committing step of glycolysis. The protein is ATP-dependent 6-phosphofructokinase of Streptococcus pyogenes serotype M1.